The following is a 462-amino-acid chain: MEVKKTMEKIVALAKNRGFIYPGSEIYGGLANSWDYGPLGVELKNNIKKAWWKKFVQENPYNVGVDCAILMNPQVWVASGHVGGFSDPLIDCKECKTRHRADKMIEEWNLKNNENVKVDGWSNEMLMNYIREKGVTCPECGGKNFTDIRKFNLMFKTFQGVTEDSKSEIYLRPETAQGIFVNFKNVQRTTRKKIPFGIGQIGKSFRNEITPGNFIFRTREFEQMELEFFCEPGTDLEWFEYWKNFCFNWLLSLNIKKENLRMRDHSKEELSHYSNATTDIEYLFPFGWGELWGIADRTDFDLRQHAEHSKEDLSYFDPNTNRKYIPYCIEPSLGADRVALVFLCDAYDEEEVEEGDIRVVLRFHPAIAPVKIAVLPLSKKLGDEAYKIYEMLIKKYNCEYDETGSIGKRYRRQDEIGTPYCVTFDFDSLNDRCVTVRDRDSMQQVRIKIDELLSYFEGKFDF.

Positions 100 and 174 each coordinate substrate. ATP-binding positions include R206–E208, F216–F221, E290–L291, and G334–R337. F221–E225 contributes to the substrate binding site. E330–G334 provides a ligand contact to substrate.

It belongs to the class-II aminoacyl-tRNA synthetase family. In terms of assembly, homodimer.

It localises to the cytoplasm. It catalyses the reaction tRNA(Gly) + glycine + ATP = glycyl-tRNA(Gly) + AMP + diphosphate. Functionally, catalyzes the attachment of glycine to tRNA(Gly). The protein is Glycine--tRNA ligase of Acetivibrio thermocellus (strain ATCC 27405 / DSM 1237 / JCM 9322 / NBRC 103400 / NCIMB 10682 / NRRL B-4536 / VPI 7372) (Clostridium thermocellum).